Reading from the N-terminus, the 91-residue chain is Protein LURE 1.6 (91 aa).

An N-terminal signal peptide occupies residues Met1–Ser20. 3 disulfide bridges follow: Cys59/Cys76, Cys62/Cys83, and Cys66/Cys85.

The protein belongs to the DEFL family. Expressed in the pistil. Detected in the synergid cells.

It localises to the secreted. Functionally, pollen tube attractants guiding pollen tubes to the ovular micropyle. This Arabidopsis thaliana (Mouse-ear cress) protein is Protein LURE 1.6.